Here is a 70-residue protein sequence, read N- to C-terminus: Large ribosomal subunit protein bL31 (70 aa).

Zn(2+) is bound by residues cysteine 16, cysteine 18, cysteine 38, and cysteine 41.

This sequence belongs to the bacterial ribosomal protein bL31 family. Type A subfamily. As to quaternary structure, part of the 50S ribosomal subunit. It depends on Zn(2+) as a cofactor.

Functionally, binds the 23S rRNA. In Bifidobacterium longum (strain DJO10A), this protein is Large ribosomal subunit protein bL31.